A 575-amino-acid chain; its full sequence is Acetolactate synthase large subunit (575 aa).

Glu57 provides a ligand contact to thiamine diphosphate. Residues Arg159, 265–286 (HGSY…LGSR), and 308–327 (DIDA…ILSD) contribute to the FAD site. The thiamine pyrophosphate binding stretch occupies residues 395 to 475 (QHQMWVAQYY…IKVVLINNHS (81 aa)). Mg(2+) is bound by residues Asp446 and Asn473.

It belongs to the TPP enzyme family. In terms of assembly, dimer of large and small chains. Mg(2+) serves as cofactor. Thiamine diphosphate is required as a cofactor.

It catalyses the reaction 2 pyruvate + H(+) = (2S)-2-acetolactate + CO2. It participates in amino-acid biosynthesis; L-isoleucine biosynthesis; L-isoleucine from 2-oxobutanoate: step 1/4. The protein operates within amino-acid biosynthesis; L-valine biosynthesis; L-valine from pyruvate: step 1/4. This Lactococcus lactis subsp. lactis (strain IL1403) (Streptococcus lactis) protein is Acetolactate synthase large subunit (ilvB).